The chain runs to 226 residues: Probable amino-acid ABC transporter permease protein YckA (226 aa).

The ABC transmembrane type-1 domain maps to 27 to 215 (IGYTLLISFV…AICSIAAVFQ (189 aa)). 5 consecutive transmembrane segments (helical) span residues 31 to 51 (LLIS…ISLA), 73 to 93 (VPIL…GIEF), 94 to 114 (SAVT…IAEI), 160 to 180 (VLLD…PELL), and 194 to 214 (MTMY…AAVF).

Belongs to the binding-protein-dependent transport system permease family. HisMQ subfamily.

It is found in the cell membrane. In terms of biological role, part of a binding-protein-dependent transport system. Probably responsible for the translocation of the substrate across the membrane. The sequence is that of Probable amino-acid ABC transporter permease protein YckA (yckA) from Bacillus subtilis (strain 168).